Here is a 100-residue protein sequence, read N- to C-terminus: Phosphoribosylformylglycinamidine synthase subunit PurS (100 aa).

This sequence belongs to the PurS family. As to quaternary structure, homodimer. Part of the FGAM synthase complex composed of 1 PurL, 1 PurQ and 2 PurS subunits.

The protein resides in the cytoplasm. It catalyses the reaction N(2)-formyl-N(1)-(5-phospho-beta-D-ribosyl)glycinamide + L-glutamine + ATP + H2O = 2-formamido-N(1)-(5-O-phospho-beta-D-ribosyl)acetamidine + L-glutamate + ADP + phosphate + H(+). It functions in the pathway purine metabolism; IMP biosynthesis via de novo pathway; 5-amino-1-(5-phospho-D-ribosyl)imidazole from N(2)-formyl-N(1)-(5-phospho-D-ribosyl)glycinamide: step 1/2. Functionally, part of the phosphoribosylformylglycinamidine synthase complex involved in the purines biosynthetic pathway. Catalyzes the ATP-dependent conversion of formylglycinamide ribonucleotide (FGAR) and glutamine to yield formylglycinamidine ribonucleotide (FGAM) and glutamate. The FGAM synthase complex is composed of three subunits. PurQ produces an ammonia molecule by converting glutamine to glutamate. PurL transfers the ammonia molecule to FGAR to form FGAM in an ATP-dependent manner. PurS interacts with PurQ and PurL and is thought to assist in the transfer of the ammonia molecule from PurQ to PurL. This chain is Phosphoribosylformylglycinamidine synthase subunit PurS, found in Synechocystis sp. (strain ATCC 27184 / PCC 6803 / Kazusa).